Consider the following 179-residue polypeptide: Ribosome maturation factor RimM (179 aa).

The region spanning 95–174 (KDEFFYFDIL…QIFCTQDAFL (80 aa)) is the PRC barrel domain.

The protein belongs to the RimM family. As to quaternary structure, binds ribosomal protein uS19.

Its subcellular location is the cytoplasm. Functionally, an accessory protein needed during the final step in the assembly of 30S ribosomal subunit, possibly for assembly of the head region. Essential for efficient processing of 16S rRNA. May be needed both before and after RbfA during the maturation of 16S rRNA. It has affinity for free ribosomal 30S subunits but not for 70S ribosomes. The sequence is that of Ribosome maturation factor RimM from Campylobacter jejuni subsp. jejuni serotype O:2 (strain ATCC 700819 / NCTC 11168).